A 385-amino-acid chain; its full sequence is 8-amino-7-oxononanoate synthase (385 aa).

A substrate-binding site is contributed by R21. 108-109 contacts pyridoxal 5'-phosphate; the sequence is GF. H133 is a binding site for substrate. Positions 179, 207, and 233 each coordinate pyridoxal 5'-phosphate. Residue K236 is modified to N6-(pyridoxal phosphate)lysine. T352 is a substrate binding site.

The protein belongs to the class-II pyridoxal-phosphate-dependent aminotransferase family. BioF subfamily. As to quaternary structure, homodimer. Pyridoxal 5'-phosphate is required as a cofactor.

The enzyme catalyses 6-carboxyhexanoyl-[ACP] + L-alanine + H(+) = (8S)-8-amino-7-oxononanoate + holo-[ACP] + CO2. The protein operates within cofactor biosynthesis; biotin biosynthesis. Its function is as follows. Catalyzes the decarboxylative condensation of pimeloyl-[acyl-carrier protein] and L-alanine to produce 8-amino-7-oxononanoate (AON), [acyl-carrier protein], and carbon dioxide. This Salmonella choleraesuis (strain SC-B67) protein is 8-amino-7-oxononanoate synthase.